The primary structure comprises 182 residues: Dual-action ribosomal maturation protein DarP (182 aa).

Belongs to the DarP family.

It localises to the cytoplasm. In terms of biological role, member of a network of 50S ribosomal subunit biogenesis factors which assembles along the 30S-50S interface, preventing incorrect 23S rRNA structures from forming. Promotes peptidyl transferase center (PTC) maturation. In Yersinia pseudotuberculosis serotype O:1b (strain IP 31758), this protein is Dual-action ribosomal maturation protein DarP.